We begin with the raw amino-acid sequence, 98 residues long: NADH-ubiquinone oxidoreductase chain 4L (98 aa).

Helical transmembrane passes span 1–21, 30–50, and 61–81; these read MSMVYANIFLAFIMSLMGLLV, LLCLEGMMLSLFVMMTVTILI, and IILLVFAACEAALGLSLLVMV.

This sequence belongs to the complex I subunit 4L family. In terms of assembly, core subunit of respiratory chain NADH dehydrogenase (Complex I) which is composed of 45 different subunits.

It localises to the mitochondrion inner membrane. The catalysed reaction is a ubiquinone + NADH + 5 H(+)(in) = a ubiquinol + NAD(+) + 4 H(+)(out). Core subunit of the mitochondrial membrane respiratory chain NADH dehydrogenase (Complex I) which catalyzes electron transfer from NADH through the respiratory chain, using ubiquinone as an electron acceptor. Part of the enzyme membrane arm which is embedded in the lipid bilayer and involved in proton translocation. The sequence is that of NADH-ubiquinone oxidoreductase chain 4L (MT-ND4L) from Pagophilus groenlandicus (Harp seal).